A 464-amino-acid chain; its full sequence is Glutamate--tRNA ligase (464 aa).

A 'HIGH' region motif is present at residues 9 to 19 (PSPTGYLHIGG). Residues 242–246 (KISKR) carry the 'KMSKS' region motif. Lys245 lines the ATP pocket.

This sequence belongs to the class-I aminoacyl-tRNA synthetase family. Glutamate--tRNA ligase type 1 subfamily. As to quaternary structure, monomer.

The protein localises to the cytoplasm. It carries out the reaction tRNA(Glu) + L-glutamate + ATP = L-glutamyl-tRNA(Glu) + AMP + diphosphate. Its function is as follows. Catalyzes the attachment of glutamate to tRNA(Glu) in a two-step reaction: glutamate is first activated by ATP to form Glu-AMP and then transferred to the acceptor end of tRNA(Glu). This chain is Glutamate--tRNA ligase, found in Neisseria gonorrhoeae (strain ATCC 700825 / FA 1090).